The chain runs to 301 residues: uncharacterized protein (301 aa).

The first 28 residues, 1–28, serve as a signal peptide directing secretion; that stretch reads MFFREDKSVAFRLRSAALSGCATGQSDA.

This is an uncharacterized protein from Treponema pallidum (strain Nichols).